The chain runs to 310 residues: Lipoyl synthase (310 aa).

Residues Cys54, Cys59, Cys65, Cys80, Cys84, Cys87, and Ser295 each coordinate [4Fe-4S] cluster. The Radical SAM core domain maps to 66 to 284 (FASGTATFLI…LFGEDNLGFM (219 aa)).

The protein belongs to the radical SAM superfamily. Lipoyl synthase family. Requires [4Fe-4S] cluster as cofactor.

It localises to the cytoplasm. The catalysed reaction is [[Fe-S] cluster scaffold protein carrying a second [4Fe-4S](2+) cluster] + N(6)-octanoyl-L-lysyl-[protein] + 2 oxidized [2Fe-2S]-[ferredoxin] + 2 S-adenosyl-L-methionine + 4 H(+) = [[Fe-S] cluster scaffold protein] + N(6)-[(R)-dihydrolipoyl]-L-lysyl-[protein] + 4 Fe(3+) + 2 hydrogen sulfide + 2 5'-deoxyadenosine + 2 L-methionine + 2 reduced [2Fe-2S]-[ferredoxin]. The protein operates within protein modification; protein lipoylation via endogenous pathway; protein N(6)-(lipoyl)lysine from octanoyl-[acyl-carrier-protein]: step 2/2. Its function is as follows. Catalyzes the radical-mediated insertion of two sulfur atoms into the C-6 and C-8 positions of the octanoyl moiety bound to the lipoyl domains of lipoate-dependent enzymes, thereby converting the octanoylated domains into lipoylated derivatives. This chain is Lipoyl synthase, found in Prochlorococcus marinus (strain MIT 9215).